We begin with the raw amino-acid sequence, 508 residues long: MAALGSSSQNVTEYVVRVPKNTAKRYNIMAFNAADKVNFATWNQARLERDLSNKKIYQEEEMPESGAGSEFNRKLREEARRKKYGIVLKEFRPEDQPWLLRVNGKSGRKFKGIKKGGVTENTAYYIFTQCADGAFEAFPVQNWYNFTPLARHRTLTAEEAEEEWERRNKVLNHFSIMQQRRLKDQDQDEDEEEKEKRSRKKPSELRIHDLEDDLEMSSDASDASGEEGSRASKAKKKAPVTKAGRKKKKKKGSDDEAFEDSDDGDFEGQEVDYMSDGSSSSPDEAEGKPKVPQQEDGPKGVDEQSESSEESEEEKPPEEDKEEEEEKKAPTPQEKKRRKDSSDDSDSSEESDIDSETSSALFMAKKKTPPKRERKPSGGSSKGTSRPGTPSAEAASTSSTLRAAASKLEQGKRTSETPAAKRLRMDTGPQSLSGKSTPSSGDVQVTEDAVRRYLTRKPMTTKDLLKKFQTKKTGLSSEQTVNVLAQILKRLNPERKMIGDKMHFSLKE.

An N-acetylalanine modification is found at alanine 2. The residue at position 156 (threonine 156) is a Phosphothreonine. The tract at residues 177 to 448 is disordered; sequence MQQRRLKDQD…SSGDVQVTED (272 aa). Serine 217, serine 218, serine 221, and serine 224 each carry phosphoserine. Basic residues predominate over residues 232–251; sequence SKAKKKAPVTKAGRKKKKKK. 2 stretches are compositionally biased toward acidic residues: residues 255 to 270 and 303 to 325; these read DEAF…EGQE and EQSE…EEEE. Threonine 331 is modified (phosphothreonine). Residues 343–355 show a composition bias toward acidic residues; it reads DDSDSSEESDIDS. Over residues 364–374 the composition is skewed to basic residues; the sequence is AKKKTPPKRER. A phosphoserine mark is found at serine 377, serine 380, serine 381, and serine 385. Polar residues predominate over residues 378–388; that stretch reads GGSSKGTSRPG. Residue threonine 389 is modified to Phosphothreonine. The span at 389–406 shows a compositional bias: low complexity; that stretch reads TPSAEAASTSSTLRAAAS. Phosphoserine is present on serine 391. Lysine 407 bears the N6-acetyllysine mark. Residues 428 to 443 show a composition bias toward polar residues; it reads GPQSLSGKSTPSSGDV. Phosphoserine is present on residues serine 431, serine 433, and serine 436. At threonine 437 the chain carries Phosphothreonine. Serine 440 is modified (phosphoserine).

Belongs to the TFIIF alpha subunit family. As to quaternary structure, heterodimer of an alpha and a beta subunit. Interacts with GTF2F2, CTDP1, TAF6/TAFII80 and URI1. Interacts with GTF2B (via C-terminus and preferentially via acetylated form); this interaction prevents binding of GTF2B to GTF2F2. Part of TBP-based Pol II pre-initiation complex (PIC), in which Pol II core assembles with general transcription factors and other specific initiation factors including GTF2E1, GTF2E2, GTF2F1, GTF2F2, TCEA1, ERCC2, ERCC3, GTF2H2, GTF2H3, GTF2H4, GTF2H5, GTF2A1, GTF2A2, GTF2B and TBP; this large multi-subunit PIC complex mediates DNA unwinding and targets Pol II core to the transcription start site where the first phosphodiester bond forms. Phosphorylated on Ser and other residues by TAF1 and casein kinase II-like kinases.

The protein resides in the nucleus. Its function is as follows. TFIIF is a general transcription initiation factor that binds to RNA polymerase II and helps to recruit it to the initiation complex in collaboration with TFIIB. It promotes transcription elongation. The protein is General transcription factor IIF subunit 1 (Gtf2f1) of Rattus norvegicus (Rat).